The primary structure comprises 154 residues: Myoglobin (154 aa).

The 147-residue stretch at Val2–Lys148 folds into the Globin domain. Position 65 (His65) interacts with nitrite. Residue His65 participates in O2 binding. Thr68 is modified (phosphothreonine). His94 contributes to the heme b binding site.

It belongs to the globin family. As to quaternary structure, monomeric.

It localises to the cytoplasm. The protein resides in the sarcoplasm. The enzyme catalyses Fe(III)-heme b-[protein] + nitric oxide + H2O = Fe(II)-heme b-[protein] + nitrite + 2 H(+). It catalyses the reaction H2O2 + AH2 = A + 2 H2O. In terms of biological role, monomeric heme protein which primary function is to store oxygen and facilitate its diffusion within muscle tissues. Reversibly binds oxygen through a pentacoordinated heme iron and enables its timely and efficient release as needed during periods of heightened demand. Depending on the oxidative conditions of tissues and cells, and in addition to its ability to bind oxygen, it also has a nitrite reductase activity whereby it regulates the production of bioactive nitric oxide. Under stress conditions, like hypoxia and anoxia, it also protects cells against reactive oxygen species thanks to its pseudoperoxidase activity. This is Myoglobin (MB) from Balaenoptera physalus (Fin whale).